Here is a 280-residue protein sequence, read N- to C-terminus: Golgi phosphoprotein 3-like (280 aa).

The disordered stretch occupies residues 1 to 30; the sequence is MTTLTRRGRRADVGQENRVDSEDYIKDKDE. Over residues 10-30 the composition is skewed to basic and acidic residues; that stretch reads RADVGQENRVDSEDYIKDKDE. Positions 62, 71, 152, and 155 each coordinate a 1,2-diacyl-sn-glycero-3-phospho-(1D-myo-inositol 4-phosphate). A beta-hairpin required for oligomerization region spans residues 171-182; it reads EKQNFLLFDMTT.

Belongs to the GOLPH3/VPS74 family. In terms of assembly, homooligomer.

The protein localises to the golgi apparatus. Its subcellular location is the golgi stack membrane. The protein resides in the trans-Golgi network membrane. In terms of biological role, phosphatidylinositol-4-phosphate-binding protein that may play a role in the process of vesicle budding at the Golgi and anterograde transport to the plasma membrane. This Xenopus tropicalis (Western clawed frog) protein is Golgi phosphoprotein 3-like (golph3l).